Reading from the N-terminus, the 448-residue chain is Homogentisate 1,2-dioxygenase (448 aa).

The active-site Proton acceptor is histidine 303. Fe cation-binding residues include histidine 346 and glutamate 352. The homogentisate site is built by tyrosine 361 and histidine 382. Histidine 382 is a binding site for Fe cation.

The protein belongs to the homogentisate dioxygenase family. In terms of assembly, hexamer; dimer of trimers. The cofactor is Fe cation.

The enzyme catalyses homogentisate + O2 = 4-maleylacetoacetate + H(+). Its pathway is amino-acid degradation; L-phenylalanine degradation; acetoacetate and fumarate from L-phenylalanine: step 4/6. Involved in the catabolism of homogentisate (2,5-dihydroxyphenylacetate or 2,5-OH-PhAc), a central intermediate in the degradation of phenylalanine and tyrosine. Catalyzes the oxidative ring cleavage of the aromatic ring of homogentisate to yield maleylacetoacetate. This Rhodopseudomonas palustris (strain BisB5) protein is Homogentisate 1,2-dioxygenase.